Reading from the N-terminus, the 343-residue chain is Armadillo repeat-containing protein 10 (343 aa).

A helical membrane pass occupies residues 5–27 (RGAGWVAAGLLLGAGACYCIYRL). A disordered region spans residues 43–83 (SKSAGALEEGTSEGQLCGRSARPQTGGTWESQWSKTSQPED). S45 bears the Phosphoserine mark. Residue E50 is modified to Phosphothreonine. The segment covering 64–82 (RPQTGGTWESQWSKTSQPE) has biased composition (polar residues). T85 is subject to Phosphothreonine. One copy of the ARM repeat lies at 138–180 (GGIPIVANKINHSNQSIKEKALNALNNLSVNVENQIKIKIYIS).

Interacts with the DNA-binding domain of p53/TP53. Expressed in all tissues tested with higher expression in placenta, liver, kidney, heart and brain.

It localises to the endoplasmic reticulum membrane. The protein localises to the mitochondrion outer membrane. Its function is as follows. May play a role in cell survival and cell growth. May suppress the transcriptional activity of p53/TP53. The sequence is that of Armadillo repeat-containing protein 10 (ARMC10) from Homo sapiens (Human).